The primary structure comprises 435 residues: Proline--tRNA ligase (435 aa).

This sequence belongs to the class-II aminoacyl-tRNA synthetase family. ProS type 2 subfamily. As to quaternary structure, homodimer.

It localises to the cytoplasm. The enzyme catalyses tRNA(Pro) + L-proline + ATP = L-prolyl-tRNA(Pro) + AMP + diphosphate. Its function is as follows. Catalyzes the attachment of proline to tRNA(Pro) in a two-step reaction: proline is first activated by ATP to form Pro-AMP and then transferred to the acceptor end of tRNA(Pro). In Sulfurimonas denitrificans (strain ATCC 33889 / DSM 1251) (Thiomicrospira denitrificans (strain ATCC 33889 / DSM 1251)), this protein is Proline--tRNA ligase (proS).